The chain runs to 101 residues: Small ribosomal subunit protein bS18c (101 aa).

This sequence belongs to the bacterial ribosomal protein bS18 family. In terms of assembly, part of the 30S ribosomal subunit.

Its subcellular location is the plastid. The protein resides in the chloroplast. In Aethionema cordifolium (Lebanon stonecress), this protein is Small ribosomal subunit protein bS18c.